Reading from the N-terminus, the 334-residue chain is Holliday junction branch migration complex subunit RuvB (334 aa).

Positions 1 to 182 are large ATPase domain (RuvB-L); that stretch reads MDERLVSSEA…FGVLSRLEYY (182 aa). ATP contacts are provided by residues Leu21, Arg22, Gly63, Lys66, Thr67, Thr68, 129–131, Arg172, Tyr182, and Arg219; that span reads EDF. Mg(2+) is bound at residue Thr67. Residues 183–253 form a small ATPAse domain (RuvB-S) region; the sequence is TQEELTDIVS…IAHDALERLQ (71 aa). The interval 256–334 is head domain (RuvB-H); the sequence is ALGLDHIDHK…HFRLEAPARD (79 aa). 2 residues coordinate DNA: Arg311 and Arg316.

This sequence belongs to the RuvB family. In terms of assembly, homohexamer. Forms an RuvA(8)-RuvB(12)-Holliday junction (HJ) complex. HJ DNA is sandwiched between 2 RuvA tetramers; dsDNA enters through RuvA and exits via RuvB. An RuvB hexamer assembles on each DNA strand where it exits the tetramer. Each RuvB hexamer is contacted by two RuvA subunits (via domain III) on 2 adjacent RuvB subunits; this complex drives branch migration. In the full resolvosome a probable DNA-RuvA(4)-RuvB(12)-RuvC(2) complex forms which resolves the HJ.

The protein resides in the cytoplasm. The catalysed reaction is ATP + H2O = ADP + phosphate + H(+). In terms of biological role, the RuvA-RuvB-RuvC complex processes Holliday junction (HJ) DNA during genetic recombination and DNA repair, while the RuvA-RuvB complex plays an important role in the rescue of blocked DNA replication forks via replication fork reversal (RFR). RuvA specifically binds to HJ cruciform DNA, conferring on it an open structure. The RuvB hexamer acts as an ATP-dependent pump, pulling dsDNA into and through the RuvAB complex. RuvB forms 2 homohexamers on either side of HJ DNA bound by 1 or 2 RuvA tetramers; 4 subunits per hexamer contact DNA at a time. Coordinated motions by a converter formed by DNA-disengaged RuvB subunits stimulates ATP hydrolysis and nucleotide exchange. Immobilization of the converter enables RuvB to convert the ATP-contained energy into a lever motion, pulling 2 nucleotides of DNA out of the RuvA tetramer per ATP hydrolyzed, thus driving DNA branch migration. The RuvB motors rotate together with the DNA substrate, which together with the progressing nucleotide cycle form the mechanistic basis for DNA recombination by continuous HJ branch migration. Branch migration allows RuvC to scan DNA until it finds its consensus sequence, where it cleaves and resolves cruciform DNA. The polypeptide is Holliday junction branch migration complex subunit RuvB (Bacillus velezensis (strain DSM 23117 / BGSC 10A6 / LMG 26770 / FZB42) (Bacillus amyloliquefaciens subsp. plantarum)).